A 1143-amino-acid chain; its full sequence is uncharacterized protein (1143 aa).

The N-terminal stretch at 1 to 20 (MKLLLLALILVLSNINLISG) is a signal peptide. Residues 21–1121 (NGLVWPHPRL…PAAGGEDSSA (1101 aa)) are Extracellular-facing. Over residues 177 to 203 (NSGGSWSSGGSGNSGGGWSSGGSGNSG) the composition is skewed to gly residues. Residues 177–1120 (NSGGSWSSGG…EPAAGGEDSS (944 aa)) are disordered. The span at 222–236 (SSGGWTSGSHSSGSW) shows a compositional bias: low complexity. Residues 237–283 (SSGGGSGSSSGGQSSGSWSSGGGSSSGGHSSGSWSSGGGSSAGGGSS) are compositionally biased toward gly residues. The segment covering 284–296 (SGSHSSGSWSSGG) has biased composition (low complexity). The segment covering 297–330 (SSSGGQSSGSWSSGGGSSSGGQSSGSWSSGGGSS) has biased composition (gly residues). The span at 331–368 (SGSHSSGSWSSGGSSSGSHSSGSWSSGGSSSSSGNSGW) shows a compositional bias: low complexity. The segment covering 374-392 (GNTGGNTGGNTGGNTGGQS) has biased composition (gly residues). A compositionally biased stretch (low complexity) spans 393-403 (SGNSGWMTASG). Composition is skewed to gly residues over residues 404–418 (GNTGGNTGGNTGGQS) and 430–444 (GNTGGNTGGNTGGQS). 2 stretches are compositionally biased toward low complexity: residues 445 to 498 (SGSS…TSSG) and 506 to 541 (GSSSSGGNSGWLTSSGGNSGGSSSSGSNSGASSSGD). Composition is skewed to gly residues over residues 555–573 (GNTGGNSGAATGGNSGGNS), 580–596 (GNSGGASSSGGNTGGNS), 604–622 (GNTGGNSGAATGGNSGGNS), 629–783 (GNSG…GGNS), 790–843 (GNSG…GGAS), and 851–905 (GNSG…GGNS). Residues 906-1059 (GAATGANSGA…GGNGASGAAN (154 aa)) show a composition bias toward low complexity. Polar residues predominate over residues 1062–1078 (SIVTPNDQNVSPLSNSD). Residues 1094–1114 (PTSRAPTVTPTPTSSAEEPAA) show a composition bias toward low complexity. Residues 1122 to 1142 (ISKYSIQSFGIFVLSMIIYLV) form a helical membrane-spanning segment. A topological domain (cytoplasmic) is located at residue Ile1143.

The protein localises to the membrane. This is an uncharacterized protein from Dictyostelium discoideum (Social amoeba).